Here is a 573-residue protein sequence, read N- to C-terminus: 60 kDa heat shock protein, mitochondrial (573 aa).

The transit peptide at 1-26 (MLRLPTVLRQMRPVSRALAPHLTRAY) directs the protein to the mitochondrion. Residue Lys-31 is modified to N6-succinyllysine. A phosphoserine mark is found at Ser-67 and Ser-70. Lys-75 is a binding site for ATP. Lys-75 carries the N6-acetyllysine modification. Position 82 is an N6-acetyllysine; alternate (Lys-82). Lys-82 carries the post-translational modification N6-succinyllysine; alternate. An N6-acetyllysine modification is found at Lys-87. Tyr-90 carries the phosphotyrosine modification. Residue Lys-91 is modified to N6-acetyllysine. 111–115 (DGTTT) lines the ATP pocket. The residue at position 125 (Lys-125) is an N6-acetyllysine; alternate. An N6-succinyllysine; alternate modification is found at Lys-125. Lys-130 carries the post-translational modification N6-acetyllysine. An N6-acetyllysine; alternate modification is found at Lys-133. An N6-succinyllysine; alternate modification is found at Lys-133. An N6-malonyllysine; alternate modification is found at Lys-133. N6-acetyllysine is present on Lys-156. 5 positions are modified to N6-acetyllysine; alternate: Lys-191, Lys-202, Lys-205, Lys-218, and Lys-236. Residues Lys-191, Lys-202, Lys-205, Lys-218, and Lys-236 each carry the N6-succinyllysine; alternate modification. Lys-249 carries the post-translational modification N6-acetyllysine. At Lys-250 the chain carries N6-acetyllysine; alternate. Lys-250 carries the post-translational modification N6-succinyllysine; alternate. Lys-269 and Lys-292 each carry N6-acetyllysine. An N6-succinyllysine modification is found at Lys-301. Lys-314 is subject to N6-acetyllysine. At Lys-352 the chain carries N6-acetyllysine; alternate. At Lys-352 the chain carries N6-succinyllysine; alternate. Lys-359 and Lys-389 each carry N6-acetyllysine. Position 396 is an N6-acetyllysine; alternate (Lys-396). An N6-succinyllysine; alternate modification is found at Lys-396. Ser-410 is subject to Phosphoserine. Gly-440 lines the ATP pocket. Lys-455 bears the N6-acetyllysine; alternate mark. Lys-455 is modified (N6-succinyllysine; alternate). Residue Lys-469 is modified to N6-acetyllysine. Lys-481 is subject to N6-acetyllysine; alternate. An N6-succinyllysine; alternate modification is found at Lys-481. Ser-488 bears the Phosphoserine mark. An ATP-binding site is contributed by Asp-520. Lys-551 participates in a covalent cross-link: Glycyl lysine isopeptide (Lys-Gly) (interchain with G-Cter in SUMO2).

This sequence belongs to the chaperonin (HSP60) family. As to quaternary structure, homoheptamer arranged in a ring structure. The functional units of these chaperonins consist of heptameric rings of the large subunit Hsp60, which function as a back-to-back double ring. Interacts with 2 heptameric Hsp10 rings to form the symmetrical football complex. Interacts with HRAS. Interacts with ATAD3A. Interacts with ETFBKMT and EEF1AKMT3. Interacts with MFHAS1.

Its subcellular location is the mitochondrion matrix. The catalysed reaction is ATP + H2O + a folded polypeptide = ADP + phosphate + an unfolded polypeptide.. Functionally, chaperonin implicated in mitochondrial protein import and macromolecular assembly. Together with Hsp10, facilitates the correct folding of imported proteins. May also prevent misfolding and promote the refolding and proper assembly of unfolded polypeptides generated under stress conditions in the mitochondrial matrix. The functional units of these chaperonins consist of heptameric rings of the large subunit Hsp60, which function as a back-to-back double ring. In a cyclic reaction, Hsp60 ring complexes bind one unfolded substrate protein per ring, followed by the binding of ATP and association with 2 heptameric rings of the co-chaperonin Hsp10. This leads to sequestration of the substrate protein in the inner cavity of Hsp60 where, for a certain period of time, it can fold undisturbed by other cell components. Synchronous hydrolysis of ATP in all Hsp60 subunits results in the dissociation of the chaperonin rings and the release of ADP and the folded substrate protein. This is 60 kDa heat shock protein, mitochondrial (HSPD1) from Cricetulus griseus (Chinese hamster).